A 466-amino-acid chain; its full sequence is MTHDGTWSDESDWEAVEFELDEAAHAPPAPVVAVVGRPNVGKSTLVNRILGRREAVVQDVPGVTRDRVSYDALWTGRRFVVQDTGGWEPDAKGLQQLVAEQASVAMRTADAVILVVDALVGATTADEAAARILLRSGKPVFLAANKVDSDKAEADAAMLWSLGLGEPHPISAMHGRGVADLLDEVLAALPEVSEVAPRPGGPRRVALVGKPNVGKSSLLNKLAGDQRSVVHDVAGTTVDPVDSLIELGDRVWRFVDTAGLRRKVGQASGHEFYASVRTHSAIDAAEVVIVLIDASAPLTEQDQRVLSMVIEAGRALVLAFNKWDLVDEDRRELLEREIDRELVQLRWAQRVNISAKTGRAVAKLVPAMETALASWDTRIATGPLNSWLKEVVAATPPPVRGGKQPRILFATQAAARPPTFVLFTTGFLEAGYRRFLERRLREAFGFEGTPIRINVRVREKRGARRR.

2 consecutive EngA-type G domains span residues 30–193 (PVVA…PEVS) and 203–376 (RRVA…ASWD). GTP contacts are provided by residues 36 to 43 (GRPNVGKS), 83 to 87 (DTGGW), 145 to 148 (NKVD), 209 to 216 (GKPNVGKS), 256 to 260 (DTAGL), and 321 to 324 (NKWD). The 83-residue stretch at 377–459 (TRIATGPLNS…PIRINVRVRE (83 aa)) folds into the KH-like domain.

It belongs to the TRAFAC class TrmE-Era-EngA-EngB-Septin-like GTPase superfamily. EngA (Der) GTPase family. Associates with the 50S ribosomal subunit.

Its function is as follows. GTPase that plays an essential role in the late steps of ribosome biogenesis. The polypeptide is GTPase Der (Mycolicibacterium paratuberculosis (strain ATCC BAA-968 / K-10) (Mycobacterium paratuberculosis)).